The sequence spans 370 residues: Flagellar P-ring protein (370 aa).

The N-terminal stretch at 1–27 (MPARPIPVPLLALALAAALAVPSPAAA) is a signal peptide.

It belongs to the FlgI family. In terms of assembly, the basal body constitutes a major portion of the flagellar organelle and consists of four rings (L,P,S, and M) mounted on a central rod.

Its subcellular location is the periplasm. It is found in the bacterial flagellum basal body. In terms of biological role, assembles around the rod to form the L-ring and probably protects the motor/basal body from shearing forces during rotation. This is Flagellar P-ring protein from Anaeromyxobacter sp. (strain K).